We begin with the raw amino-acid sequence, 646 residues long: Wee1-like protein kinase (646 aa).

The disordered stretch occupies residues 1 to 181; the sequence is MSFLSRQQPP…GTPPHKTFRK (181 aa). Positions 32-43 are enriched in acidic residues; sequence DCEEEEEEEEEE. Ser53 carries the post-translational modification Phosphoserine; by PLK1. Residues Ser78 and Ser85 each carry the phosphoserine modification. Residues 94–103 show a composition bias toward low complexity; it reads LLPGACPGAD. The residue at position 123 (Ser123) is a Phosphoserine; by CDK1. Residues Ser127, Ser137, Ser139, Ser150, and Ser165 each carry the phosphoserine modification. Basic and acidic residues predominate over residues 158 to 170; that stretch reads RAGEGRRSPRPDH. Phosphothreonine is present on residues Thr187, Thr190, and Thr239. Ser270, Ser307, and Ser312 each carry phosphoserine. The Protein kinase domain occupies 299–569; that stretch reads FHELEKIGSG…AMALVKHSVL (271 aa). Residues 305 to 313 and Lys328 each bind ATP; that span reads IGSGEFGSV. Asn342 contributes to the Mg(2+) binding site. Asp426 serves as the catalytic Proton acceptor. Residues Asn431, Asp463, and Gly465 each contribute to the Mg(2+) site. A Phosphoserine; by BRSK1 and BRSK2 modification is found at Ser642.

It belongs to the protein kinase superfamily. Ser/Thr protein kinase family. WEE1 subfamily. Requires Mg(2+) as cofactor. Post-translationally, phosphorylated during M and G1 phases. Also autophosphorylated. Phosphorylation at Ser-642 by BRSK1 and BRSK2 in post-mitotic neurons, leads to down-regulate WEE1 activity in polarized neurons. Phosphorylated at Ser-53 and Ser-123 by PLK1 and CDK1, respectively, generating an signal for degradation that can be recognized by the SCF(BTRC) complex, leading to its ubiquitination and degradation at the onset of G2/M phase. In terms of processing, dephosphorylated at Thr-239 by CTDP1. Dephosphorylated at Ser-53 and Ser-123 by the serine/threonine-protein phosphatase 2A preventing its ubiquitin-mediated degradation. Ubiquitinated and degraded at the onset of G2/M phase.

The protein localises to the nucleus. It catalyses the reaction L-tyrosyl-[protein] + ATP = O-phospho-L-tyrosyl-[protein] + ADP + H(+). With respect to regulation, synthesis is increased during S and G2 phases, presumably by an increase in transcription; activity is decreased by phosphorylation during M phase. Protein levels fall in M phase as a result of decreased synthesis combined with degradation. Activity seems to be negatively regulated by phosphorylation upon entry into mitosis, although N-terminal phosphorylation might also regulate the protein stability via protection from proteolysis or might regulate the subcellular location. In terms of biological role, acts as a negative regulator of entry into mitosis (G2 to M transition) by protecting the nucleus from cytoplasmically activated cyclin B1-complexed CDK1 before the onset of mitosis by mediating phosphorylation of CDK1 on 'Tyr-15'. Specifically phosphorylates and inactivates cyclin B1-complexed CDK1 reaching a maximum during G2 phase and a minimum as cells enter M phase. Phosphorylation of cyclin B1-CDK1 occurs exclusively on 'Tyr-15' and phosphorylation of monomeric CDK1 does not occur. Its activity increases during S and G2 phases and decreases at M phase when it is hyperphosphorylated. A correlated decrease in protein level occurs at M/G1 phase, probably due to its degradation. The protein is Wee1-like protein kinase of Homo sapiens (Human).